The chain runs to 352 residues: Blue-sensitive opsin (352 aa).

Topologically, residues 1 to 42 are extracellular; that stretch reads MRGNRLVEFPDDFWIPIPLDTNNVTALSPFLVPQDHLGSPTI. Asparagine 23 carries N-linked (GlcNAc...) asparagine glycosylation. Residues 43–67 traverse the membrane as a helical segment; sequence FYSMSALMFVLFVAGTAINLLTIAC. Topologically, residues 68–79 are cytoplasmic; it reads TLQYKKLRSHLN. Residues 80–105 traverse the membrane as a helical segment; the sequence is YILVNMAVANLIVASTGSSTCFVCFA. The Extracellular segment spans residues 106-119; the sequence is FKYMVLGPLGCKIE. Cysteines 116 and 193 form a disulfide. A helical transmembrane segment spans residues 120-139; that stretch reads GFTAALGGMVSLWSLAVIAF. Residues 140–158 lie on the Cytoplasmic side of the membrane; the sequence is ERWLVICKPLGNFVFKSEH. Residues 159 to 182 form a helical membrane-spanning segment; the sequence is ALLCCALTWVCGLCASVPPLVGWS. The Extracellular segment spans residues 183 to 208; it reads RYIPEGMQCSCGPDWYTTGNKFNNES. Residue asparagine 206 is glycosylated (N-linked (GlcNAc...) asparagine). The chain crosses the membrane as a helical span at residues 209–236; it reads FVMFLFCFCFAVPFSIIVFCYSQLLFTL. Over 237 to 258 the chain is Cytoplasmic; sequence KMAAKAQADSASTQKAEKEVTR. A helical membrane pass occupies residues 259 to 282; sequence MVVVMVVAFLVCYVPYASFALWVI. Over 283-290 the chain is Extracellular; it reads NNRGQTFD. Residues 291–315 form a helical membrane-spanning segment; sequence LRLATIPSCVSKASTVYNPVIYVLL. N6-(retinylidene)lysine is present on lysine 302. Topologically, residues 316–352 are cytoplasmic; the sequence is NKQFRLCMKKMLGMSADEDEESSTSQSTTEVSKVGPS. Residues 332-352 form a disordered region; it reads DEDEESSTSQSTTEVSKVGPS.

This sequence belongs to the G-protein coupled receptor 1 family. Opsin subfamily. Phosphorylated on some or all of the serine and threonine residues present in the C-terminal region. In terms of tissue distribution, the color pigments are found in the cone photoreceptor cells.

Its subcellular location is the membrane. Visual pigments are the light-absorbing molecules that mediate vision. They consist of an apoprotein, opsin, covalently linked to cis-retinal. The chain is Blue-sensitive opsin from Oryzias latipes (Japanese rice fish).